We begin with the raw amino-acid sequence, 183 residues long: dCTP deaminase (183 aa).

Residues 97-102 and D113 contribute to the dCTP site; that span reads RSSFAR. E123 serves as the catalytic Proton donor/acceptor. The dCTP site is built by Y155 and Q162.

This sequence belongs to the dCTP deaminase family. As to quaternary structure, homotrimer.

It catalyses the reaction dCTP + H2O + H(+) = dUTP + NH4(+). It functions in the pathway pyrimidine metabolism; dUMP biosynthesis; dUMP from dCTP (dUTP route): step 1/2. In terms of biological role, catalyzes the deamination of dCTP to dUTP. The sequence is that of dCTP deaminase from Sulfurisphaera tokodaii (strain DSM 16993 / JCM 10545 / NBRC 100140 / 7) (Sulfolobus tokodaii).